We begin with the raw amino-acid sequence, 2193 residues long: Genome polyprotein (2193 aa).

Residues 1–22 (MGSQVSTQRSGSHENSNSASEG) form a disordered region. G2 is lipidated: N-myristoyl glycine; by host. Residues 2–1503 (GSQVSTQRSG…HLNRAVLIMQ (1502 aa)) are Cytoplasmic-facing. Amphipathic alpha-helix regions lie at residues 566–588 (GDGI…LTSL) and 568–588 (GIAD…LTSL). Active-site for protease 2A activity residues include H883 and D901. Zn(2+) is bound by residues C918 and C920. Residue C972 is the For protease 2A activity of the active site. Zn(2+)-binding residues include C978 and H980. Residues 1112 to 1184 (SASWLKKFND…EQSAASQEDL (73 aa)) form a membrane-binding region. The tract at residues 1112–1250 (SASWLKKFND…SPGTGKSLAT (139 aa)) is oligomerization. An RNA-binding region spans residues 1133–1137 (SNKIS). The SF3 helicase domain maps to 1216–1374 (EKRMNNYMQF…YKTDLGRLDA (159 aa)). 1240 to 1247 (GSPGTGKS) provides a ligand contact to ATP. Zn(2+)-binding residues include C1381, C1392, and C1397. The C4-type; degenerate zinc finger occupies 1381-1397 (CSENNTANFKRCSPLVC). Residues 1424–1431 (EYNNRYAI) are RNA-binding. The interval 1435 to 1440 (IEALFQ) is oligomerization. Residues 1504–1519 (SIATVVAVVSLVYVIY) lie within the membrane without spanning it. Over 1520-2193 (KLFAGFQGAY…NLRRNWLELF (674 aa)) the chain is Cytoplasmic. Y1529 is modified (O-(5'-phospho-RNA)-tyrosine). Residues 1549–1727 (GPSLDFALSL…FCAGLKRSYF (179 aa)) enclose the Peptidase C3 domain. Active-site for protease 3C activity residues include H1588, E1619, and C1695. Residues 1958 to 2073 (GSLFAFDYSG…ASYPFPIDCL (116 aa)) form the RdRp catalytic domain. Positions 1964 and 2060 each coordinate Mg(2+).

The protein belongs to the picornaviruses polyprotein family. Interacts with capsid protein VP1 and capsid protein VP3 to form heterotrimeric protomers. In terms of assembly, interacts with capsid protein VP0, and capsid protein VP3 to form heterotrimeric protomers. Five protomers subsequently associate to form pentamers which serve as building blocks for the capsid. Interacts with capsid protein VP2, capsid protein VP3 and capsid protein VP4 following cleavage of capsid protein VP0. As to quaternary structure, interacts with capsid protein VP1 and capsid protein VP3 in the mature capsid. Interacts with capsid protein VP0 and capsid protein VP1 to form heterotrimeric protomers. Five protomers subsequently associate to form pentamers which serve as building blocks for the capsid. Interacts with capsid protein VP4 in the mature capsid. Interacts with protein 2C; this interaction may be important for virion morphogenesis. In terms of assembly, interacts with capsid protein VP1 and capsid protein VP3. As to quaternary structure, homodimer. Homohexamer; forms a hexameric ring structure with 6-fold symmetry characteristic of AAA+ ATPases. Interacts (via N-terminus) with host RTN3 (via reticulon domain); this interaction is important for viral replication. Interacts with capsid protein VP3; this interaction may be important for virion morphogenesis. In terms of assembly, interacts with protein 3CD. As to quaternary structure, homodimer. Interacts with host GBF1. Interacts (via GOLD domain) with host ACBD3 (via GOLD domain); this interaction allows the formation of a viral protein 3A/ACBD3 heterotetramer with a 2:2 stoichiometry, which will stimulate the recruitment of host PI4KB in order to synthesize PI4P at the viral RNA replication sites. Interacts with RNA-directed RNA polymerase. In terms of assembly, interacts with host IFIH1/MDA5; this interaction inhibits host IFIH1. As to quaternary structure, interacts with protein 3AB and with RNA-directed RNA polymerase. Interacts with Viral protein genome-linked and with protein 3CD. Requires Mg(2+) as cofactor. Post-translationally, specific enzymatic cleavages in vivo by the viral proteases yield processing intermediates and the mature proteins. Myristoylation is required for the formation of pentamers during virus assembly. Further assembly of 12 pentamers and a molecule of genomic RNA generates the provirion. In terms of processing, during virion maturation, immature virions are rendered infectious following cleavage of VP0 into VP4 and VP2. This maturation seems to be an autocatalytic event triggered by the presence of RNA in the capsid and it is followed by a conformational change infectious virion. Post-translationally, myristoylation is required during RNA encapsidation and formation of the mature virus particle. VPg is uridylylated by the polymerase into VPg-pUpU. This acts as a nucleotide-peptide primer for the genomic RNA replication.

It localises to the virion. The protein localises to the host cytoplasm. It is found in the host cytoplasmic vesicle membrane. Its subcellular location is the host nucleus. The catalysed reaction is a ribonucleoside 5'-triphosphate + H2O = a ribonucleoside 5'-diphosphate + phosphate + H(+). The enzyme catalyses Selective cleavage of Tyr-|-Gly bond in the picornavirus polyprotein.. It carries out the reaction RNA(n) + a ribonucleoside 5'-triphosphate = RNA(n+1) + diphosphate. It catalyses the reaction Selective cleavage of Gln-|-Gly bond in the poliovirus polyprotein. In other picornavirus reactions Glu may be substituted for Gln, and Ser or Thr for Gly.. With respect to regulation, replication or transcription is subject to high level of random mutations by the nucleotide analog ribavirin. In terms of biological role, forms an icosahedral capsid of pseudo T=3 symmetry with capsid proteins VP2 and VP3. The capsid is 300 Angstroms in diameter, composed of 60 copies of each capsid protein and enclosing the viral positive strand RNA genome. Capsid protein VP1 mainly forms the vertices of the capsid. Capsid protein VP1 interacts with host cell receptor to provide virion attachment to target host cells. This attachment induces virion internalization. After binding to its receptor, the capsid undergoes conformational changes. Capsid protein VP1 N-terminus (that contains an amphipathic alpha-helix) and capsid protein VP4 are externalized. Together, they shape a pore in the host membrane through which viral genome is translocated to host cell cytoplasm. Functionally, forms an icosahedral capsid of pseudo T=3 symmetry with capsid proteins VP2 and VP3. The capsid is 300 Angstroms in diameter, composed of 60 copies of each capsid protein and enclosing the viral positive strand RNA genome. Lies on the inner surface of the capsid shell. After binding to the host receptor, the capsid undergoes conformational changes. Capsid protein VP4 is released, Capsid protein VP1 N-terminus is externalized, and together, they shape a pore in the host membrane through which the viral genome is translocated into the host cell cytoplasm. Its function is as follows. Component of immature procapsids, which is cleaved into capsid proteins VP4 and VP2 after maturation. Allows the capsid to remain inactive before the maturation step. In terms of biological role, cysteine protease that cleaves viral polyprotein and specific host proteins. It is responsible for the autocatalytic cleavage between the P1 and P2 regions, which is the first cleavage occurring in the polyprotein. Also cleaves the host translation initiation factor EIF4G1, in order to shut down the capped cellular mRNA translation. Inhibits the host nucleus-cytoplasm protein and RNA trafficking by cleaving host members of the nuclear pores. Counteracts stress granule formation probably by antagonizing its assembly or promoting its dissassembly. Cleaves and inhibits host IFIH1/MDA5, thereby inhibiting the type-I IFN production and the establishment of the antiviral state. Cleaves and inhibits host MAVS, thereby inhibiting the type-I IFN production and the establishment of the antiviral state. Functionally, plays an essential role in the virus replication cycle by acting as a viroporin. Creates a pore in the host endoplasmic reticulum and as a consequence releases Ca2+ in the cytoplasm of infected cell. In turn, high levels of cytoplasmic calcium may trigger membrane trafficking and transport of viral ER-associated proteins to viroplasms, sites of viral genome replication. Induces and associates with structural rearrangements of intracellular membranes. Displays RNA-binding, nucleotide binding and NTPase activities. May play a role in virion morphogenesis and viral RNA encapsidation by interacting with the capsid protein VP3. Its function is as follows. Localizes the viral replication complex to the surface of membranous vesicles. Together with protein 3CD binds the Cis-Active RNA Element (CRE) which is involved in RNA synthesis initiation. Acts as a cofactor to stimulate the activity of 3D polymerase, maybe through a nucleid acid chaperone activity. In terms of biological role, localizes the viral replication complex to the surface of membranous vesicles. It inhibits host cell endoplasmic reticulum-to-Golgi apparatus transport and causes the disassembly of the Golgi complex, possibly through GBF1 interaction. This would result in depletion of MHC, trail receptors and IFN receptors at the host cell surface. Plays an essential role in viral RNA replication by recruiting ACBD3 and PI4KB at the viral replication sites, thereby allowing the formation of the rearranged membranous structures where viral replication takes place. Functionally, acts as a primer for viral RNA replication and remains covalently bound to viral genomic RNA. VPg is uridylylated prior to priming replication into VPg-pUpU. The oriI viral genomic sequence may act as a template for this. The VPg-pUpU is then used as primer on the genomic RNA poly(A) by the RNA-dependent RNA polymerase to replicate the viral genome. During genome replication, the VPg-RNA linkage is removed by the host TDP2, thereby accelerating replication. During the late stage of the replication cycle, host TDP2 is excluded from sites of viral RNA synthesis and encapsidation, allowing for the generation of progeny virions. Involved in the viral replication complex and viral polypeptide maturation. It exhibits protease activity with a specificity and catalytic efficiency that is different from protease 3C. Protein 3CD lacks polymerase activity. Protein 3CD binds to the 5'UTR of the viral genome. Its function is as follows. Major viral protease that mediates proteolytic processing of the polyprotein. Cleaves host EIF5B, contributing to host translation shutoff. Also cleaves host PABPC1, contributing to host translation shutoff. Binds and inhibits host IFIH1/MDA5, thereby inhibiting the type-I IFN production and the establishment of the antiviral state. Cleaves host MAP3K7/TAK1, resulting in inhibition of TRAF6-triggered NF-kappa-B induction. Cleaves host NLRP1, triggers host N-glycine-mediated degradation of the autoinhibitory NLRP1 N-terminal fragment. In terms of biological role, replicates the viral genomic RNA on the surface of intracellular membranes. May form linear arrays of subunits that propagate along a strong head-to-tail interaction called interface-I. Covalently attaches UMP to a tyrosine of VPg, which is used to prime RNA synthesis. The positive stranded RNA genome is first replicated at virus induced membranous vesicles, creating a dsRNA genomic replication form. This dsRNA is then used as template to synthesize positive stranded RNA genomes. ss(+)RNA genomes are either translated, replicated or encapsidated. The chain is Genome polyprotein from Homo sapiens (Human).